The following is a 564-amino-acid chain: 3beta-hydroxysteroid-dehydrogenase/decarboxylase isoform 2 (564 aa).

An NAD(+)-binding site is contributed by 16 to 21 (GGRGFA). N-linked (GlcNAc...) asparagine glycans are attached at residues Asn-146 and Asn-158. 2 residues coordinate NAD(+): Tyr-161 and Lys-165. The active-site Proton donor is the Lys-165. One can recognise a Reticulon domain in the interval 384-564 (VADTLLWKDL…EKLFGSKKHD (181 aa)). 2 helical membrane-spanning segments follow: residues 398 to 418 (IAIFILISIYYNFVATGSTVV) and 424 to 444 (ALLVASVFLFLHGILPEKIFG). Asn-474 carries N-linked (GlcNAc...) asparagine glycosylation. The next 2 membrane-spanning stretches (helical) occupy residues 486–506 (GNDWSFFFKVVFVLLALSLAG) and 507–527 (AISLHSIFVIGLPIAFLAFLV).

The protein belongs to the 3-beta-HSD family.

The protein resides in the endoplasmic reticulum membrane. The catalysed reaction is a 3beta-hydroxysteroid-4alpha-carboxylate + NAD(+) = a 3-oxosteroid + CO2 + NADH. It catalyses the reaction 4alpha-carboxy-4beta,14alpha-dimethyl-9beta,19-cyclo-5alpha-ergost-24(24(1))-en-3beta-ol + NAD(+) = cycloeucalenone + CO2 + NADH. The protein operates within steroid biosynthesis; zymosterol biosynthesis; zymosterol from lanosterol: step 4/6. In terms of biological role, 3beta-hydroxysteroid-dehydrogenase/decarboxylase involved in sterol synthesis. Catalyzes the formation of 3-oxosteroids from 3beta-hydroxysteroids-4alpha-carboxylate. Involved in the regulation of inflorescence internodes and leaves growth, probably by affecting auxin transporter activity possibly by altering sterol composition in the membranes. This chain is 3beta-hydroxysteroid-dehydrogenase/decarboxylase isoform 2, found in Arabidopsis thaliana (Mouse-ear cress).